The sequence spans 341 residues: Retinol dehydrogenase 10-A (341 aa).

The chain crosses the membrane as a helical; Signal-anchor span at residues 3-23 (IVLEFFLVTFRVLWAFVLAAG). 40–64 (LITGAGSGLGRLFALEFARRRAQLV) contacts NADP(+). Serine 197 lines the substrate pocket. Tyrosine 210 serves as the catalytic Proton acceptor.

Belongs to the short-chain dehydrogenases/reductases (SDR) family.

It localises to the microsome membrane. It is found in the endoplasmic reticulum membrane. It catalyses the reaction all-trans-retinol + NADP(+) = all-trans-retinal + NADPH + H(+). Its pathway is cofactor metabolism; retinol metabolism. Its function is as follows. Retinol dehydrogenase with a clear preference for NADP. Converts all-trans-retinol to all-trans-retinal. Has no detectable activity towards 11-cis-retinol, 9-cis-retinol and 13-cis-retinol. The polypeptide is Retinol dehydrogenase 10-A (rdh10-a) (Xenopus laevis (African clawed frog)).